We begin with the raw amino-acid sequence, 220 residues long: Adenylate kinase (220 aa).

Residue 12–17 coordinates ATP; that stretch reads GAGKGT. The segment at 32 to 62 is NMP; that stretch reads STGDIFRDIVKKENDELGKKIKEIMEKGELV. Residues T33, R38, 60–62, 88–91, and Q95 contribute to the AMP site; these read ELV and GYPR. The interval 129–166 is LID; it reads SRRICPKCGRIYNMISLPPKEDELCDDCKVKLVQRDDD. Residue R130 participates in ATP binding. Residues C133 and C136 each coordinate Zn(2+). 139 to 140 is a binding site for ATP; the sequence is IY. Zn(2+) contacts are provided by C153 and C156. AMP-binding residues include R163 and R174. ATP is bound at residue I202.

This sequence belongs to the adenylate kinase family. In terms of assembly, monomer.

Its subcellular location is the cytoplasm. The enzyme catalyses AMP + ATP = 2 ADP. Its pathway is purine metabolism; AMP biosynthesis via salvage pathway; AMP from ADP: step 1/1. Functionally, catalyzes the reversible transfer of the terminal phosphate group between ATP and AMP. Plays an important role in cellular energy homeostasis and in adenine nucleotide metabolism. This Thermotoga neapolitana protein is Adenylate kinase.